The following is a 636-amino-acid chain: Chaperone protein DnaK2 (636 aa).

Position 198 is a phosphothreonine; by autocatalysis (Thr-198). The segment covering Glu-604–Thr-618 has biased composition (low complexity). A disordered region spans residues Glu-604–Lys-636. Residues Asp-625–Lys-636 are compositionally biased toward acidic residues.

The protein belongs to the heat shock protein 70 family.

In terms of biological role, acts as a chaperone. The polypeptide is Chaperone protein DnaK2 (dnaK2) (Synechocystis sp. (strain ATCC 27184 / PCC 6803 / Kazusa)).